Consider the following 101-residue polypeptide: Apolipoprotein C-II (101 aa).

An N-terminal signal peptide occupies residues 1–22; sequence MGIRYLLVLVLVLLVLGCEVQG. Positions 23-28 are excised as a propeptide; that stretch reads AHMPQQ. The segment at 66-74 is lipid binding; that stretch reads TMDEKIREI. A lipoprotein lipase cofactor region spans residues 78 to 101; it reads STAAVSTYAGIFTDQLLSMLKGDQ.

This sequence belongs to the apolipoprotein C2 family. Proapolipoprotein C-II is synthesized as a sialic acid containing glycoprotein which is subsequently desialylated prior to its proteolytic processing. Post-translationally, proapolipoprotein C-II, the major form found in plasma undergoes proteolytic cleavage of its N-terminal hexapeptide to generate apolipoprotein C-II, which occurs as the minor form in plasma.

The protein resides in the secreted. Component of chylomicrons, very low-density lipoproteins (VLDL), low-density lipoproteins (LDL), and high-density lipoproteins (HDL) in plasma. Plays an important role in lipoprotein metabolism as an activator of lipoprotein lipase. Both proapolipoprotein C-II and apolipoprotein C-II can activate lipoprotein lipase. This is Apolipoprotein C-II (APOC2) from Neomonachus schauinslandi (Hawaiian monk seal).